Consider the following 160-residue polypeptide: Ribosomal RNA large subunit methyltransferase H (160 aa).

S-adenosyl-L-methionine-binding positions include Leu76, Gly108, and 127–132 (LGKMTW).

Belongs to the RNA methyltransferase RlmH family. Homodimer.

The protein localises to the cytoplasm. It carries out the reaction pseudouridine(1915) in 23S rRNA + S-adenosyl-L-methionine = N(3)-methylpseudouridine(1915) in 23S rRNA + S-adenosyl-L-homocysteine + H(+). In terms of biological role, specifically methylates the pseudouridine at position 1915 (m3Psi1915) in 23S rRNA. This is Ribosomal RNA large subunit methyltransferase H from Rhizobium rhizogenes (strain K84 / ATCC BAA-868) (Agrobacterium radiobacter).